The chain runs to 256 residues: Probable fructose-2,6-bisphosphatase TIGAR A (256 aa).

His-11 functions as the Tele-phosphohistidine intermediate in the catalytic mechanism. The active-site Proton donor/acceptor is the Glu-89. A disordered region spans residues 147-170; sequence HQDKVQDGGTSSADESTEAPAGLA.

Belongs to the phosphoglycerate mutase family.

Its subcellular location is the cytoplasm. The protein resides in the nucleus. The protein localises to the mitochondrion. The enzyme catalyses beta-D-fructose 2,6-bisphosphate + H2O = beta-D-fructose 6-phosphate + phosphate. Functionally, fructose-bisphosphatase hydrolyzing fructose-2,6-bisphosphate as well as fructose-1,6-bisphosphate. Acts as a negative regulator of glycolysis by lowering intracellular levels of fructose-2,6-bisphosphate in a p53/TP53-dependent manner, resulting in the pentose phosphate pathway (PPP) activation and NADPH production. Contributes to the generation of reduced glutathione to cause a decrease in intracellular reactive oxygen species (ROS) content, correlating with its ability to protect cells from oxidative or metabolic stress-induced cell death. May play a role in mitophagy inhibition. The chain is Probable fructose-2,6-bisphosphatase TIGAR A from Danio rerio (Zebrafish).